The sequence spans 423 residues: D-tagatose-1,6-bisphosphate aldolase subunit GatZ (423 aa).

This sequence belongs to the GatZ/KbaZ family. GatZ subfamily. In terms of assembly, forms a complex with GatY.

Its pathway is carbohydrate metabolism; D-tagatose 6-phosphate degradation; D-glyceraldehyde 3-phosphate and glycerone phosphate from D-tagatose 6-phosphate: step 2/2. Functionally, component of the tagatose-1,6-bisphosphate aldolase GatYZ that is required for full activity and stability of the Y subunit. Could have a chaperone-like function for the proper and stable folding of GatY. When expressed alone, GatZ does not show any aldolase activity. Is involved in the catabolism of galactitol. The polypeptide is D-tagatose-1,6-bisphosphate aldolase subunit GatZ (Salmonella agona (strain SL483)).